An 804-amino-acid chain; its full sequence is Angiotensin-converting enzyme 2 (804 aa).

The N-terminal stretch at 1 to 17 (MTGSFWLLLSLVAVTAA) is a signal peptide. Residues 18–739 (QSTTEEQAKT…LGPPYEPPVT (722 aa)) are Extracellular-facing. Positions 19–606 (STTEEQAKTF…QNRNSFVGWS (588 aa)) constitute a Peptidase M2 domain. N-linked (GlcNAc...) asparagine glycosylation is found at asparagine 53 and asparagine 90. Arginine 168 is a binding site for chloride. A substrate-binding site is contributed by arginine 272. Asparagine 298 carries an N-linked (GlcNAc...) asparagine glycan. A disulfide bridge connects residues cysteine 343 and cysteine 360. 344 to 345 (HP) contacts substrate. A Zn(2+)-binding site is contributed by histidine 373. Glutamate 374 serves as the catalytic Proton acceptor. Positions 377 and 401 each coordinate Zn(2+). Asparagine 431 is a glycosylation site (N-linked (GlcNAc...) asparagine). Positions 476 and 480 each coordinate chloride. The active-site Proton donor is the histidine 504. A substrate-binding site is contributed by tyrosine 514. Cysteine 529 and cysteine 541 are disulfide-bonded. Asparagine 545 is a glycosylation site (N-linked (GlcNAc...) asparagine). Residues 613–804 (SDQSIKVRIS…QNIDDVQTSL (192 aa)) form the Collectrin-like domain. Residues 651–658 (RKYFSEAR) are essential for cleavage by ADAM17. Asparagine 659 and asparagine 689 each carry an N-linked (GlcNAc...) asparagine glycan. Residues 696–715 (RTEVENAIRLSRDRINDVFQ) are essential for cleavage by TMPRSS11D and TMPRSS2. Residues 740 to 760 (IWLIIFGVVMGVVVIGIVVLI) traverse the membrane as a helical segment. Over 761 to 804 (FTGIRNRRKKNQASSEENPYGSVDLNKGENNSGFQNIDDVQTSL) the chain is Cytoplasmic. Residues 771-804 (NQASSEENPYGSVDLNKGENNSGFQNIDDVQTSL) are disordered. The LIR signature appears at 777–785 (ENPYGSVDL). Residue tyrosine 780 is modified to Phosphotyrosine. The short motif at 780 to 783 (YGSV) is the Endocytic sorting signal element. Residues 780-784 (YGSVD) carry the SH2-binding motif. Serine 782 bears the Phosphoserine mark. A Glycyl lysine isopeptide (Lys-Gly) (interchain with G-Cter in ubiquitin) cross-link involves residue lysine 787. Positions 788–804 (GENNSGFQNIDDVQTSL) are enriched in polar residues. A PTB motif is present at residues 791–794 (NSGF). The short motif at 802 to 804 (TSL) is the PDZ-binding element.

This sequence belongs to the peptidase M2 family. Homodimer. Interacts with the catalytically active form of TMPRSS2. Interacts with SLC6A19; this interaction is essential for expression and function of SLC6A19 in intestine. Interacts with ITGA5:ITGB1. Probably interacts (via endocytic sorting signal motif) with AP2M1; the interaction is inhibited by phosphorylation of Tyr-780. Interacts (via PDZ-binding motif) with NHERF1 (via PDZ domains); the interaction may enhance ACE2 membrane residence. Requires Zn(2+) as cofactor. It depends on chloride as a cofactor. Proteolytic cleavage by ADAM17 generates a secreted form. Also cleaved by serine proteases: TMPRSS2, TMPRSS11D and HPN/TMPRSS1. In terms of processing, phosphorylated. Phosphorylation at Tyr-780 probably inhibits interaction with AP2M1 and enables interactions with proteins containing SH2 domains. Post-translationally, ubiquitinated. Ubiquitinated on Lys-787 via 'Lys-48'-linked ubiquitin. 'Lys-48'-linked deubiquitinated by USP50 on the Lys-787; leading to its stabilization.

It localises to the secreted. The protein localises to the cell membrane. It is found in the cytoplasm. Its subcellular location is the cell projection. The protein resides in the cilium. It localises to the apical cell membrane. The catalysed reaction is angiotensin II + H2O = angiotensin-(1-7) + L-phenylalanine. It carries out the reaction angiotensin I + H2O = angiotensin-(1-9) + L-leucine. It catalyses the reaction bradykinin(1-8) + H2O = bradykinin(1-7) + L-phenylalanine. The enzyme catalyses neurotensin + H2O = neurotensin-(1-12) + L-leucine. The catalysed reaction is kinetensin + H2O = kinetensin-(1-8) + L-leucine. It carries out the reaction dynorphin A-(1-13) + H2O = dynorphin A-(1-12) + L-lysine. It catalyses the reaction apelin-13 + H2O = apelin-12 + L-phenylalanine. The enzyme catalyses [Pyr1]apelin-13 + H2O = [Pyr1]apelin-12 + L-phenylalanine. The catalysed reaction is apelin-17 + H2O = apelin-16 + L-phenylalanine. Its function is as follows. Essential counter-regulatory carboxypeptidase of the renin-angiotensin hormone system that is a critical regulator of blood volume, systemic vascular resistance, and thus cardiovascular homeostasis. Converts angiotensin I to angiotensin 1-9, a nine-amino acid peptide with anti-hypertrophic effects in cardiomyocytes, and angiotensin II to angiotensin 1-7, which then acts as a beneficial vasodilator and anti-proliferation agent, counterbalancing the actions of the vasoconstrictor angiotensin II. Also removes the C-terminal residue from three other vasoactive peptides, neurotensin, kinetensin, and des-Arg bradykinin, but is not active on bradykinin. Also cleaves other biological peptides, such as apelins, casomorphins and dynorphin A. Plays an important role in amino acid transport by acting as binding partner of amino acid transporter SLC6A19 in intestine, regulating trafficking, expression on the cell surface, and its catalytic activity. The sequence is that of Angiotensin-converting enzyme 2 (ACE2) from Bos taurus (Bovine).